Here is a 167-residue protein sequence, read N- to C-terminus: Probable host range protein 2 (167 aa).

The protein belongs to the poxviridae C7 protein family.

Its function is as follows. Plays a role for multiplication of the virus in different cell types. This is Probable host range protein 2 from Yaba monkey tumor virus (strain VR587) (YMTV).